The chain runs to 305 residues: Autophagy-related protein 27 (305 aa).

The signal sequence occupies residues 1–22 (MARYKGLSILSLFAVFSSLASA). The Lumenal portion of the chain corresponds to 23–242 (ELDCSNIKVD…EDGGSAPSGH (220 aa)). The 208-residue stretch at 24-231 (LDCSNIKVDG…EWKTKYACEN (208 aa)) folds into the MRH domain. 2 disulfides stabilise this stretch: Cys-26-Cys-66 and Cys-74-Cys-81. N-linked (GlcNAc...) asparagine glycosylation is present at Asn-58. Asn-85 carries N-linked (GlcNAc...) asparagine glycosylation. Cys-156 and Cys-229 are oxidised to a cystine. Positions 163–202 (LEGLESPKPDGDKKKDGEKKDDDKKDNKDKEGKSKRDGEE) are disordered. A helical membrane pass occupies residues 243-263 (WGFFTWVIVLYVVLVSLPLLS). Over 264-305 (ERVTNVRCHSQPVPVHFGLSDIRLVAQLQPVWSSRVGLASSQ) the chain is Cytoplasmic.

Belongs to the ATG27 family.

It is found in the cytoplasmic vesicle membrane. The protein localises to the golgi apparatus membrane. It localises to the mitochondrion membrane. The protein resides in the preautophagosomal structure membrane. Effector of phosphatidylinositol 3-phosphate kinase signaling. Regulates the cytoplasm to vacuole transport (Cvt) vesicle formation. Plays a role in ATG protein retrieval from the pre-autophagosomal structure (PAS). This chain is Autophagy-related protein 27, found in Arthroderma benhamiae (strain ATCC MYA-4681 / CBS 112371) (Trichophyton mentagrophytes).